The primary structure comprises 289 residues: Trimeric intracellular cation channel type B (289 aa).

The Lumenal portion of the chain corresponds to 1 to 18; sequence MDVFAFFNLNELAFGLSK. Residues 19-36 traverse the membrane as a helical segment; that stretch reads LPMFPYFDMAHYIISVMS. The Cytoplasmic segment spans residues 37–49; sequence LREQPGALCVSQR. A helical membrane pass occupies residues 50–73; it reads SPLACWFSSMLYCFGGAVLSALML. Residues 74–85 are Lumenal-facing; the sequence is ADAPVAPLSNTT. Residues 86 to 103 form a helical membrane-spanning segment; sequence NLLLATLMWYLVFYCPLD. Over 104–107 the chain is Cytoplasmic; that stretch reads VVYS. Residues 108 to 125 traverse the membrane as a helical segment; it reads LASLLPLRLVLTAMKEVT. A 1,2-diacyl-sn-glycero-3-phospho-(1D-myo-inositol-4,5-bisphosphate) is bound by residues Lys-122 and Arg-126. Over 126–144 the chain is Lumenal; the sequence is RTWKVLSGVSQAGSKYSDA. Residues 145 to 162 form a helical membrane-spanning segment; sequence LFVMVAVGWAKGAGGGLI. Over 163–183 the chain is Cytoplasmic; it reads SNFEQLVRGVWKPETNELLKM. Residues 184 to 201 form a helical membrane-spanning segment; that stretch reads SYPTKVTLLGAVVFSLQQ. Over 202-210 the chain is Lumenal; it reads CRYLPIQTH. The helical transmembrane segment at 211–230 threads the bilayer; it reads HLTFIYTLFTVTNKTRMMLL. Over 231–289 the chain is Cytoplasmic; the sequence is GSSSHPLSSLESFLYKTLFVRPLTDLSAEHTHSKHNGSVPEPTTAQTHTKEAEASKKTN. The segment at 260–289 is disordered; sequence HTHSKHNGSVPEPTTAQTHTKEAEASKKTN. A compositionally biased stretch (basic and acidic residues) spans 278 to 289; the sequence is HTKEAEASKKTN.

Belongs to the TMEM38 family. In terms of assembly, homotrimer; conformation seems to be controled by binding to diacylglycerol (DAG).

It is found in the endoplasmic reticulum membrane. The enzyme catalyses K(+)(in) = K(+)(out). Its activity is regulated as follows. Channel activity is activated by increased cytosolic Ca(2+) levels and blocked by luminal high Ca(2+) levels. In terms of biological role, intracellular monovalent cation channel required for maintenance of rapid intracellular calcium release. Acts as a potassium counter-ion channel that functions in synchronization with calcium release from intracellular stores. Activated by increased cytosolic Ca(2+) levels. This is Trimeric intracellular cation channel type B (tmem38b) from Danio rerio (Zebrafish).